Reading from the N-terminus, the 379-residue chain is Queuine tRNA-ribosyltransferase (379 aa).

The Proton acceptor role is filled by aspartate 91. Substrate contacts are provided by residues 91-95 (DSGGF), aspartate 145, glutamine 189, and glycine 216. The interval 247–253 (GVGKPED) is RNA binding. Aspartate 266 acts as the Nucleophile in catalysis. Residues 271–275 (TRNAR) are RNA binding; important for wobble base 34 recognition. Residues cysteine 304, cysteine 306, cysteine 309, and histidine 335 each coordinate Zn(2+).

The protein belongs to the queuine tRNA-ribosyltransferase family. As to quaternary structure, homodimer. Within each dimer, one monomer is responsible for RNA recognition and catalysis, while the other monomer binds to the replacement base PreQ1. It depends on Zn(2+) as a cofactor.

It catalyses the reaction 7-aminomethyl-7-carbaguanine + guanosine(34) in tRNA = 7-aminomethyl-7-carbaguanosine(34) in tRNA + guanine. Its pathway is tRNA modification; tRNA-queuosine biosynthesis. Functionally, catalyzes the base-exchange of a guanine (G) residue with the queuine precursor 7-aminomethyl-7-deazaguanine (PreQ1) at position 34 (anticodon wobble position) in tRNAs with GU(N) anticodons (tRNA-Asp, -Asn, -His and -Tyr). Catalysis occurs through a double-displacement mechanism. The nucleophile active site attacks the C1' of nucleotide 34 to detach the guanine base from the RNA, forming a covalent enzyme-RNA intermediate. The proton acceptor active site deprotonates the incoming PreQ1, allowing a nucleophilic attack on the C1' of the ribose to form the product. After dissociation, two additional enzymatic reactions on the tRNA convert PreQ1 to queuine (Q), resulting in the hypermodified nucleoside queuosine (7-(((4,5-cis-dihydroxy-2-cyclopenten-1-yl)amino)methyl)-7-deazaguanosine). The chain is Queuine tRNA-ribosyltransferase from Vibrio cholerae serotype O1 (strain ATCC 39315 / El Tor Inaba N16961).